Reading from the N-terminus, the 477-residue chain is Putative WAS protein family homolog 4 (477 aa).

A WHD1 region spans residues 1–180 (MSGVMCLKAS…EGLGGLPSNI (180 aa)). 2 disordered regions span residues 310–420 (QDGV…QGGH) and 434–477 (KGIS…DWES). Positions 315 to 327 (TPPPPPPPPPPAP) are enriched in pro residues. Positions 362–477 (QGAPREVVDP…QAEDEDDWES (116 aa)) are VCA. Positions 374-396 (GWATLLESIRQAGGIGKAKLRSM) constitute a WH2 domain. The segment covering 395-411 (SMKERKLEKQQQKEQEQ) has biased composition (basic and acidic residues). Residues 437–449 (SGKGPGAGDGPGG) show a composition bias toward gly residues.

Belongs to the WASH1 family. In terms of assembly, interacts (via WHD1 region) with WASHC2C; the interaction is direct.

The protein localises to the early endosome membrane. The protein resides in the recycling endosome membrane. Functionally, may act as a nucleation-promoting factor at the surface of endosomes, where it recruits and activates the Arp2/3 complex to induce actin polymerization, playing a key role in the fission of tubules that serve as transport intermediates during endosome sorting. In Homo sapiens (Human), this protein is Putative WAS protein family homolog 4 (WASH4P).